A 611-amino-acid polypeptide reads, in one-letter code: DNA mismatch repair protein MutL (611 aa).

Belongs to the DNA mismatch repair MutL/HexB family.

Functionally, this protein is involved in the repair of mismatches in DNA. It is required for dam-dependent methyl-directed DNA mismatch repair. May act as a 'molecular matchmaker', a protein that promotes the formation of a stable complex between two or more DNA-binding proteins in an ATP-dependent manner without itself being part of a final effector complex. This chain is DNA mismatch repair protein MutL, found in Borreliella afzelii (strain PKo) (Borrelia afzelii).